The sequence spans 314 residues: Carbamate kinase (314 aa).

This sequence belongs to the carbamate kinase family. As to quaternary structure, homodimer.

It localises to the cytoplasm. It carries out the reaction hydrogencarbonate + NH4(+) + ATP = carbamoyl phosphate + ADP + H2O + H(+). Its pathway is metabolic intermediate metabolism; carbamoyl phosphate degradation; CO(2) and NH(3) from carbamoyl phosphate: step 1/1. The sequence is that of Carbamate kinase (arcC) from Clostridium perfringens (strain 13 / Type A).